The sequence spans 244 residues: MRIIVVDNYEEMSKKAAAMVASQVILKPDSVLGLATGDTPIGMYKEIINIYKNQKMDFSKARTFNLDEYYGLNRENPQSYYYYMMNNLFNHVNIDKNNINIPNGMADNIEIECKEYERKIDKAGGIDLQILGIGVNGHIGFNEPNISFESETHLVNLNEKTIESNSRFFSSKEEVPTKAISVGIKSIIHSKKIILLACGSAKSDAVSKTINGKINPNIPASILQLHRDVVVIIDKEAASKLNLK.

Aspartate 67 functions as the Proton acceptor; for enolization step in the catalytic mechanism. The active-site For ring-opening step is asparagine 136. The active-site Proton acceptor; for ring-opening step is the histidine 138. Glutamate 143 serves as the catalytic For ring-opening step.

The protein belongs to the glucosamine/galactosamine-6-phosphate isomerase family. NagB subfamily.

It catalyses the reaction alpha-D-glucosamine 6-phosphate + H2O = beta-D-fructose 6-phosphate + NH4(+). It functions in the pathway amino-sugar metabolism; N-acetylneuraminate degradation; D-fructose 6-phosphate from N-acetylneuraminate: step 5/5. Its function is as follows. Catalyzes the reversible isomerization-deamination of glucosamine 6-phosphate (GlcN6P) to form fructose 6-phosphate (Fru6P) and ammonium ion. This Clostridium botulinum (strain ATCC 19397 / Type A) protein is Glucosamine-6-phosphate deaminase.